Here is a 309-residue protein sequence, read N- to C-terminus: D-alanine--D-alanine ligase (309 aa).

Positions 106–305 constitute an ATP-grasp domain; it reads KMLWKAFGLP…FEQLVVKILE (200 aa). 136–191 serves as a coordination point for ATP; sequence VEKLGLPVMVKPSLEGSSVGLTKVKRVEDLKSAVDFALKYDDTVLIEEWLSGAEFT. Positions 259, 272, and 274 each coordinate Mg(2+).

Belongs to the D-alanine--D-alanine ligase family. Requires Mg(2+) as cofactor. It depends on Mn(2+) as a cofactor.

Its subcellular location is the cytoplasm. It catalyses the reaction 2 D-alanine + ATP = D-alanyl-D-alanine + ADP + phosphate + H(+). It participates in cell wall biogenesis; peptidoglycan biosynthesis. In terms of biological role, cell wall formation. In Pasteurella multocida (strain Pm70), this protein is D-alanine--D-alanine ligase.